Here is a 261-residue protein sequence, read N- to C-terminus: Cytochrome c oxidase subunit 3 (261 aa).

At 1 to 15 (MTHQTHAYHMVNPSP) the chain is on the mitochondrial matrix side. Residues 16–34 (WPLTGALSALLLTSGLIMW) form a helical membrane-spanning segment. Residues 35 to 40 (FHFNSF) are Mitochondrial intermembrane-facing. The helical transmembrane segment at 41-66 (LLVIIGLTCMLLTMYQWWRDIVREGT) threads the bilayer. The Mitochondrial matrix segment spans residues 67–72 (FQGHHT). Residues 73-105 (PVVQKGLRYGMVLFIVSEVFFFLGFFWAFYHSS) traverse the membrane as a helical segment. The Mitochondrial intermembrane portion of the chain corresponds to 106-128 (LAPTPELGGCWPPTGIHPLNPLE). Residues 129 to 152 (VPLLNTSILLASGVSITWAHHSLM) traverse the membrane as a helical segment. The Mitochondrial matrix portion of the chain corresponds to 153–155 (EGN). A helical transmembrane segment spans residues 156 to 183 (RKQMIQALSITILLGIYFTILQASEYYE). The Mitochondrial intermembrane segment spans residues 184–190 (SSFTISD). The helical transmembrane segment at 191 to 223 (GVYGSTFFVATGFHGLHVIIGTTFLIVCLLRQF) threads the bilayer. Over 224-232 (NFHFTSTHH) the chain is Mitochondrial matrix. Residues 233-256 (FGFEAAAWYWHFVDVVWLFLYVSI) form a helical membrane-spanning segment. Residues 257 to 261 (YWWGS) lie on the Mitochondrial intermembrane side of the membrane.

Belongs to the cytochrome c oxidase subunit 3 family. In terms of assembly, component of the cytochrome c oxidase (complex IV, CIV), a multisubunit enzyme composed of 14 subunits. The complex is composed of a catalytic core of 3 subunits MT-CO1, MT-CO2 and MT-CO3, encoded in the mitochondrial DNA, and 11 supernumerary subunits COX4I, COX5A, COX5B, COX6A, COX6B, COX6C, COX7A, COX7B, COX7C, COX8 and NDUFA4, which are encoded in the nuclear genome. The complex exists as a monomer or a dimer and forms supercomplexes (SCs) in the inner mitochondrial membrane with NADH-ubiquinone oxidoreductase (complex I, CI) and ubiquinol-cytochrome c oxidoreductase (cytochrome b-c1 complex, complex III, CIII), resulting in different assemblies (supercomplex SCI(1)III(2)IV(1) and megacomplex MCI(2)III(2)IV(2)).

It is found in the mitochondrion inner membrane. It catalyses the reaction 4 Fe(II)-[cytochrome c] + O2 + 8 H(+)(in) = 4 Fe(III)-[cytochrome c] + 2 H2O + 4 H(+)(out). Its function is as follows. Component of the cytochrome c oxidase, the last enzyme in the mitochondrial electron transport chain which drives oxidative phosphorylation. The respiratory chain contains 3 multisubunit complexes succinate dehydrogenase (complex II, CII), ubiquinol-cytochrome c oxidoreductase (cytochrome b-c1 complex, complex III, CIII) and cytochrome c oxidase (complex IV, CIV), that cooperate to transfer electrons derived from NADH and succinate to molecular oxygen, creating an electrochemical gradient over the inner membrane that drives transmembrane transport and the ATP synthase. Cytochrome c oxidase is the component of the respiratory chain that catalyzes the reduction of oxygen to water. Electrons originating from reduced cytochrome c in the intermembrane space (IMS) are transferred via the dinuclear copper A center (CU(A)) of subunit 2 and heme A of subunit 1 to the active site in subunit 1, a binuclear center (BNC) formed by heme A3 and copper B (CU(B)). The BNC reduces molecular oxygen to 2 water molecules using 4 electrons from cytochrome c in the IMS and 4 protons from the mitochondrial matrix. This chain is Cytochrome c oxidase subunit 3 (MT-CO3), found in Osphranter robustus (Wallaroo).